A 164-amino-acid chain; its full sequence is Peptidyl-prolyl cis-trans isomerase A-like 4D (164 aa).

One can recognise a PPIase cyclophilin-type domain in the interval 7–163 (FFEITRDGKP…KKITIADCGQ (157 aa)).

Belongs to the cyclophilin-type PPIase family. PPIase A subfamily.

The protein localises to the cytoplasm. The catalysed reaction is [protein]-peptidylproline (omega=180) = [protein]-peptidylproline (omega=0). PPIases accelerate the folding of proteins. It catalyzes the cis-trans isomerization of proline imidic peptide bonds in oligopeptides. This is Peptidyl-prolyl cis-trans isomerase A-like 4D from Homo sapiens (Human).